Reading from the N-terminus, the 511-residue chain is 2-isopropylmalate synthase (511 aa).

The Pyruvate carboxyltransferase domain occupies 5–267; the sequence is LIVFDTTLRD…DTRIDATQIV (263 aa). Mn(2+) is bound by residues Asp-14, His-202, His-204, and Asn-238. Residues 393-511 are regulatory domain; it reads RLVASRFHSE…SKLERLNPQL (119 aa).

This sequence belongs to the alpha-IPM synthase/homocitrate synthase family. LeuA type 1 subfamily. In terms of assembly, homodimer. Requires Mn(2+) as cofactor.

It is found in the cytoplasm. It carries out the reaction 3-methyl-2-oxobutanoate + acetyl-CoA + H2O = (2S)-2-isopropylmalate + CoA + H(+). The protein operates within amino-acid biosynthesis; L-leucine biosynthesis; L-leucine from 3-methyl-2-oxobutanoate: step 1/4. In terms of biological role, catalyzes the condensation of the acetyl group of acetyl-CoA with 3-methyl-2-oxobutanoate (2-ketoisovalerate) to form 3-carboxy-3-hydroxy-4-methylpentanoate (2-isopropylmalate). This is 2-isopropylmalate synthase from Aromatoleum aromaticum (strain DSM 19018 / LMG 30748 / EbN1) (Azoarcus sp. (strain EbN1)).